We begin with the raw amino-acid sequence, 407 residues long: Imidazolonepropionase (407 aa).

Residues histidine 73 and histidine 75 each coordinate Fe(3+). Zn(2+)-binding residues include histidine 73 and histidine 75. 4-imidazolone-5-propanoate is bound by residues arginine 82, tyrosine 145, and histidine 178. Tyrosine 145 is an N-formimidoyl-L-glutamate binding site. Fe(3+) is bound at residue histidine 243. Position 243 (histidine 243) interacts with Zn(2+). Glutamine 246 is a 4-imidazolone-5-propanoate binding site. Aspartate 318 is a Fe(3+) binding site. Aspartate 318 is a binding site for Zn(2+). 2 residues coordinate N-formimidoyl-L-glutamate: asparagine 320 and glycine 322. Residue threonine 323 coordinates 4-imidazolone-5-propanoate.

This sequence belongs to the metallo-dependent hydrolases superfamily. HutI family. Zn(2+) serves as cofactor. Fe(3+) is required as a cofactor.

The protein resides in the cytoplasm. The enzyme catalyses 4-imidazolone-5-propanoate + H2O = N-formimidoyl-L-glutamate. The protein operates within amino-acid degradation; L-histidine degradation into L-glutamate; N-formimidoyl-L-glutamate from L-histidine: step 3/3. Its function is as follows. Catalyzes the hydrolytic cleavage of the carbon-nitrogen bond in imidazolone-5-propanoate to yield N-formimidoyl-L-glutamate. It is the third step in the universal histidine degradation pathway. This Serratia proteamaculans (strain 568) protein is Imidazolonepropionase.